Here is a 164-residue protein sequence, read N- to C-terminus: MFHILRLESTVDLSEPLKDNGIIVFQSDKLDLEPSPNLGPTGIDNTNVNLINAKGDVLLHIGIRRRENAFVFNSIPYGESRGPEERIPLEGTFGDRRDPSITIFDHPDRYQIMIDYKTVYYYKKRLEGRCEKVSYKINEGQTPPFSDVLGVTVLYFANVMPRAN.

Positions 9-154 (STVDLSEPLK…FSDVLGVTVL (146 aa)) constitute a Galectin domain. Residues asparagine 45, arginine 64, asparagine 73, arginine 81, glutamate 84, and asparagine 138 each contribute to the a carbohydrate site.

In terms of assembly, homotetramer. Oligomerization is required for carbohydrate binding.

The protein localises to the secreted. The protein resides in the extracellular space. It is found in the extracellular matrix. It localises to the cell wall. Binds complex carbohydrates, such as chitooligosaccharides. Does not bind lactose. May play a role in fruiting body formation. The sequence is that of Galectin-3 (Cgl3) from Coprinopsis cinerea (Inky cap fungus).